The following is a 249-amino-acid chain: 3-deoxy-manno-octulosonate cytidylyltransferase (249 aa).

It belongs to the KdsB family.

It localises to the cytoplasm. It carries out the reaction 3-deoxy-alpha-D-manno-oct-2-ulosonate + CTP = CMP-3-deoxy-beta-D-manno-octulosonate + diphosphate. It participates in nucleotide-sugar biosynthesis; CMP-3-deoxy-D-manno-octulosonate biosynthesis; CMP-3-deoxy-D-manno-octulosonate from 3-deoxy-D-manno-octulosonate and CTP: step 1/1. Its pathway is bacterial outer membrane biogenesis; lipopolysaccharide biosynthesis. Its function is as follows. Activates KDO (a required 8-carbon sugar) for incorporation into bacterial lipopolysaccharide in Gram-negative bacteria. In Brucella anthropi (strain ATCC 49188 / DSM 6882 / CCUG 24695 / JCM 21032 / LMG 3331 / NBRC 15819 / NCTC 12168 / Alc 37) (Ochrobactrum anthropi), this protein is 3-deoxy-manno-octulosonate cytidylyltransferase.